Here is a 332-residue protein sequence, read N- to C-terminus: Procathepsin L (332 aa).

The signal sequence occupies residues 1-17; it reads MHPLLFLAGLCLGVASA. Positions 18–112 are cleaved as a propeptide — activation peptide; it reads APQLYQSLDA…KVFQAPFFVE (95 aa). Glutamate 121 is a binding site for Zn(2+). The active site involves cysteine 137. Zn(2+) is bound by residues glutamate 162, aspartate 183, glutamate 198, and aspartate 208. Cysteine 168 and cysteine 210 are joined by a disulfide. The N-linked (GlcNAc...) asparagine glycan is linked to asparagine 220. Zn(2+) is bound by residues aspartate 226, aspartate 249, aspartate 272, and aspartate 274. Cysteine 268 and cysteine 321 are disulfide-bonded. The active site involves histidine 275. The propeptide occupies 288–290; it reads ETE. Asparagine 299 is an active-site residue.

The protein belongs to the peptidase C1 family. In terms of assembly, dimer of a heavy and a light chain linked by disulfide bonds. Interacts with Long isoform of CD74/Ii chain; the interaction stabilizes the conformation of mature CTSL. Post-translationally, during export along the endocytic pathway, pro-CTSL undergoes several proteolytic cleavages to generate the CTSL single-chain and two-chain mature forms, composed of a heavy chain linked to a light chain by disulfide bonds. Autocleavage; produces the single-chain CTSL after cleavage of the propeptide. The cleavage can be intermolecular. In terms of tissue distribution, expressed in the endometrium.

The protein resides in the lysosome. It is found in the apical cell membrane. The protein localises to the cytoplasmic vesicle. It localises to the secretory vesicle. Its subcellular location is the chromaffin granule. The protein resides in the secreted. It is found in the extracellular space. It carries out the reaction Specificity close to that of papain. As compared to cathepsin B, cathepsin L exhibits higher activity toward protein substrates, but has little activity on Z-Arg-Arg-NHMec, and no peptidyl-dipeptidase activity.. Inhibited by the propeptide produced by autocleavage. Long isoform of CD74/Ii chain stabilizes the conformation of mature CTSL by binding to its active site and serving as a chaperone to help maintain a pool of mature enzyme in endocytic compartments and extracellular space of APCs. IFNG enhances the conversion into the CTSL mature and active form. Inhibited by CST6. Inhibited by the glycopeptide antibiotic teicoplanin. Inhibited by amantadine. Its function is as follows. Thiol protease important for the overall degradation of proteins in lysosomes. Plays a critical for normal cellular functions such as general protein turnover, antigen processing and bone remodeling. Involved in the solubilization of cross-linked TG/thyroglobulin and in the subsequent release of thyroid hormone thyroxine (T4) by limited proteolysis of TG/thyroglobulin in the thyroid follicle lumen. In neuroendocrine chromaffin cells secretory vesicles, catalyzes the prohormone proenkephalin processing to the active enkephalin peptide neurotransmitter. In thymus, regulates CD4(+) T cell positive selection by generating the major histocompatibility complex class II (MHCII) bound peptide ligands presented by cortical thymic epithelial cells. Also mediates invariant chain processing in cortical thymic epithelial cells. Major elastin-degrading enzyme at neutral pH. Accumulates as a mature and active enzyme in the extracellular space of antigen presenting cells (APCs) to regulate degradation of the extracellular matrix in the course of inflammation. Secreted form generates endostatin from COL18A1. Critical for cardiac morphology and function. Plays an important role in hair follicle morphogenesis and cycling, as well as epidermal differentiation. Required for maximal stimulation of steroidogenesis by TIMP1. The sequence is that of Procathepsin L (CTSL) from Felis catus (Cat).